Here is a 145-residue protein sequence, read N- to C-terminus: Bacilliredoxin SSP1241 (145 aa).

Belongs to the bacilliredoxin family.

In Staphylococcus saprophyticus subsp. saprophyticus (strain ATCC 15305 / DSM 20229 / NCIMB 8711 / NCTC 7292 / S-41), this protein is Bacilliredoxin SSP1241.